The chain runs to 922 residues: GPI inositol-deacylase (922 aa).

Residues methionine 1 to leucine 11 lie on the Cytoplasmic side of the membrane. A helical transmembrane segment spans residues alanine 12 to phenylalanine 32. The Lumenal segment spans residues glutamate 33–alanine 597. Residue serine 174 is part of the active site. Residues asparagine 363, asparagine 402, and asparagine 558 are each glycosylated (N-linked (GlcNAc...) asparagine). The helical transmembrane segment at leucine 598 to leucine 618 threads the bilayer. Residues serine 619–proline 641 are Cytoplasmic-facing. The chain crosses the membrane as a helical span at residues phenylalanine 642–valine 662. Residues leucine 663–aspartate 668 lie on the Lumenal side of the membrane. Residues alanine 669–phenylalanine 689 traverse the membrane as a helical segment. Topologically, residues glycine 690–alanine 694 are cytoplasmic. A helical membrane pass occupies residues tyrosine 695–leucine 715. Residues lysine 716–proline 733 lie on the Lumenal side of the membrane. Residues valine 734 to leucine 754 traverse the membrane as a helical segment. Over serine 755–histidine 816 the chain is Cytoplasmic. The segment at asparagine 776–asparagine 801 is disordered. Positions lysine 782 to histidine 793 are enriched in basic residues. Residues serine 817–tryptophan 837 form a helical membrane-spanning segment. The Lumenal segment spans residues serine 838–lysine 853. Residues proline 854–isoleucine 874 traverse the membrane as a helical segment. The Cytoplasmic portion of the chain corresponds to lysine 875–valine 894. A helical membrane pass occupies residues isoleucine 895 to phenylalanine 915. At histidine 916–methionine 922 the chain is on the lumenal side.

Belongs to the GPI inositol-deacylase family.

It is found in the endoplasmic reticulum membrane. Functionally, GPI inositol-deacylase that catalyzes the remove of the acyl chain linked to the 2-OH position of inositol ring from the GPI-anchored protein (GPI-AP) in the endoplasmic reticulum. Initiates the post-attachment remodeling phase of GPI-AP biogenesis and participates in endoplasmic reticulum (ER)-to-Golgi transport of GPI-anchored protein. The protein is GPI inositol-deacylase of Rattus norvegicus (Rat).